The primary structure comprises 199 residues: Imidazole glycerol phosphate synthase subunit HisH (199 aa).

Residues 1–199 (MTVVVDYEMG…QILKNLREML (199 aa)) enclose the Glutamine amidotransferase type-1 domain. The active-site Nucleophile is the Cys79. Residues His180 and Glu182 contribute to the active site.

In terms of assembly, heterodimer of HisH and HisF.

It is found in the cytoplasm. The catalysed reaction is 5-[(5-phospho-1-deoxy-D-ribulos-1-ylimino)methylamino]-1-(5-phospho-beta-D-ribosyl)imidazole-4-carboxamide + L-glutamine = D-erythro-1-(imidazol-4-yl)glycerol 3-phosphate + 5-amino-1-(5-phospho-beta-D-ribosyl)imidazole-4-carboxamide + L-glutamate + H(+). The enzyme catalyses L-glutamine + H2O = L-glutamate + NH4(+). It functions in the pathway amino-acid biosynthesis; L-histidine biosynthesis; L-histidine from 5-phospho-alpha-D-ribose 1-diphosphate: step 5/9. Its function is as follows. IGPS catalyzes the conversion of PRFAR and glutamine to IGP, AICAR and glutamate. The HisH subunit catalyzes the hydrolysis of glutamine to glutamate and ammonia as part of the synthesis of IGP and AICAR. The resulting ammonia molecule is channeled to the active site of HisF. The sequence is that of Imidazole glycerol phosphate synthase subunit HisH from Carboxydothermus hydrogenoformans (strain ATCC BAA-161 / DSM 6008 / Z-2901).